A 280-amino-acid polypeptide reads, in one-letter code: Urease accessory protein UreD (280 aa).

The protein belongs to the UreD family. In terms of assembly, ureD, UreF and UreG form a complex that acts as a GTP-hydrolysis-dependent molecular chaperone, activating the urease apoprotein by helping to assemble the nickel containing metallocenter of UreC. The UreE protein probably delivers the nickel.

The protein resides in the cytoplasm. Its function is as follows. Required for maturation of urease via the functional incorporation of the urease nickel metallocenter. The chain is Urease accessory protein UreD from Staphylococcus saprophyticus subsp. saprophyticus (strain ATCC 15305 / DSM 20229 / NCIMB 8711 / NCTC 7292 / S-41).